A 327-amino-acid polypeptide reads, in one-letter code: Gamma-resorcylate decarboxylase (327 aa).

E8 and H10 together coordinate Zn(2+). 3 residues coordinate 2,6-dihydroxybenzoate: F23, H164, and D287. Zn(2+)-binding residues include H164 and D287. D287 is a catalytic residue.

The protein belongs to the metallo-dependent hydrolases superfamily. ACMSD family. Homotetramer. Dimer of dimers. Requires Zn(2+) as cofactor.

The catalysed reaction is 2,6-dihydroxybenzoate + H(+) = resorcinol + CO2. The enzyme catalyses 2,3-dihydroxybenzoate + H(+) = catechol + CO2. Its pathway is aromatic compound metabolism. Inhibited by CuCl(2), monoiodoacetate and diethylpyrocarbonate. Inhibited by 2,3-dihydroxybenzaldehyde, which is an analog of the substrate 2,3-dihydroxybenzoate. Involved in the gamma-resorcylate (2,6-dihydroxybenzoate) catabolism. Catalyzes the reversible decarboxylation of gamma-resorcylate to resorcinol. The reaction is reversible, but equilibrium greatly favors the decarboxylation reaction. Also catalyzes the decarboxylation of 2,3-dihydroxybenzoate to catechol, but does not act on 2,4-dihydroxybenzoate, 2,5-dihydroxybenzoate, 3,4-dihydroxybenzoate, 3,5-dihydroxybenzoate, 2-hydroxybenzoate, or 3-hydroxybenzoate. Only resorcinol is carboxylated by the reverse reaction. The sequence is that of Gamma-resorcylate decarboxylase from Rhizobium sp. (strain MTP-10005).